A 123-amino-acid polypeptide reads, in one-letter code: Fluoride-specific ion channel FluC 2 (123 aa).

3 helical membrane-spanning segments follow: residues 30 to 50 (FPLP…FVAG), 68 to 88 (VGFI…VLLL), and 93 to 113 (WPLA…AVWV). G72 and T75 together coordinate Na(+).

This sequence belongs to the fluoride channel Fluc/FEX (TC 1.A.43) family.

Its subcellular location is the cell membrane. The catalysed reaction is fluoride(in) = fluoride(out). Na(+) is not transported, but it plays an essential structural role and its presence is essential for fluoride channel function. Its function is as follows. Fluoride-specific ion channel. Important for reducing fluoride concentration in the cell, thus reducing its toxicity. The polypeptide is Fluoride-specific ion channel FluC 2 (Symbiobacterium thermophilum (strain DSM 24528 / JCM 14929 / IAM 14863 / T)).